A 348-amino-acid chain; its full sequence is Uroporphyrinogen decarboxylase (348 aa).

Substrate is bound by residues 23-27 (RQAGR), Asp72, Tyr148, Ser203, and His316.

It belongs to the uroporphyrinogen decarboxylase family. In terms of assembly, homodimer.

It is found in the cytoplasm. The catalysed reaction is uroporphyrinogen III + 4 H(+) = coproporphyrinogen III + 4 CO2. It participates in porphyrin-containing compound metabolism; protoporphyrin-IX biosynthesis; coproporphyrinogen-III from 5-aminolevulinate: step 4/4. Catalyzes the decarboxylation of four acetate groups of uroporphyrinogen-III to yield coproporphyrinogen-III. This is Uroporphyrinogen decarboxylase from Myxococcus xanthus (strain DK1622).